The following is a 294-amino-acid chain: ATP synthase gamma chain (294 aa).

Belongs to the ATPase gamma chain family. In terms of assembly, F-type ATPases have 2 components, CF(1) - the catalytic core - and CF(0) - the membrane proton channel. CF(1) has five subunits: alpha(3), beta(3), gamma(1), delta(1), epsilon(1). CF(0) has three main subunits: a, b and c.

It is found in the cell inner membrane. In terms of biological role, produces ATP from ADP in the presence of a proton gradient across the membrane. The gamma chain is believed to be important in regulating ATPase activity and the flow of protons through the CF(0) complex. In Parvibaculum lavamentivorans (strain DS-1 / DSM 13023 / NCIMB 13966), this protein is ATP synthase gamma chain.